Here is a 95-residue protein sequence, read N- to C-terminus: Co-chaperonin GroES (95 aa).

The protein belongs to the GroES chaperonin family. In terms of assembly, heptamer of 7 subunits arranged in a ring. Interacts with the chaperonin GroEL.

The protein localises to the cytoplasm. Functionally, together with the chaperonin GroEL, plays an essential role in assisting protein folding. The GroEL-GroES system forms a nano-cage that allows encapsulation of the non-native substrate proteins and provides a physical environment optimized to promote and accelerate protein folding. GroES binds to the apical surface of the GroEL ring, thereby capping the opening of the GroEL channel. The polypeptide is Co-chaperonin GroES (Staphylococcus haemolyticus (strain JCSC1435)).